Consider the following 160-residue polypeptide: SsrA-binding protein (160 aa).

The segment at 131-160 (KKEFDKRHTEKERDSDREIQRAMRTKGKDD) is disordered.

Belongs to the SmpB family.

Its subcellular location is the cytoplasm. In terms of biological role, required for rescue of stalled ribosomes mediated by trans-translation. Binds to transfer-messenger RNA (tmRNA), required for stable association of tmRNA with ribosomes. tmRNA and SmpB together mimic tRNA shape, replacing the anticodon stem-loop with SmpB. tmRNA is encoded by the ssrA gene; the 2 termini fold to resemble tRNA(Ala) and it encodes a 'tag peptide', a short internal open reading frame. During trans-translation Ala-aminoacylated tmRNA acts like a tRNA, entering the A-site of stalled ribosomes, displacing the stalled mRNA. The ribosome then switches to translate the ORF on the tmRNA; the nascent peptide is terminated with the 'tag peptide' encoded by the tmRNA and targeted for degradation. The ribosome is freed to recommence translation, which seems to be the essential function of trans-translation. The chain is SsrA-binding protein from Stutzerimonas stutzeri (strain A1501) (Pseudomonas stutzeri).